The following is a 503-amino-acid chain: Cytochrome P450 3A17 (503 aa).

A heme-binding site is contributed by cysteine 442.

The protein belongs to the cytochrome P450 family. Heme is required as a cofactor.

It is found in the endoplasmic reticulum membrane. Its subcellular location is the microsome membrane. It catalyses the reaction an organic molecule + reduced [NADPH--hemoprotein reductase] + O2 = an alcohol + oxidized [NADPH--hemoprotein reductase] + H2O + H(+). In terms of biological role, cytochromes P450 are a group of heme-thiolate monooxygenases. In liver microsomes, this enzyme is involved in an NADPH-dependent electron transport pathway. It oxidizes a variety of structurally unrelated compounds, including steroids, fatty acids, and xenobiotics. In Cavia porcellus (Guinea pig), this protein is Cytochrome P450 3A17 (CYP3A17).